A 301-amino-acid chain; its full sequence is Probable alpha-L-glutamate ligase 1 (301 aa).

The ATP-grasp domain maps to 104 to 287; the sequence is LQLLSRKGIG…VTEPIVEYIE (184 aa). ATP is bound by residues Lys141, 178–179, Asp187, and 211–213; these read EY and RSN. Mg(2+) is bound by residues Asp248, Glu260, and Asn262. Residues Asp248, Glu260, and Asn262 each coordinate Mn(2+).

It belongs to the RimK family. It depends on Mg(2+) as a cofactor. Mn(2+) serves as cofactor.

This chain is Probable alpha-L-glutamate ligase 1, found in Shewanella sp. (strain W3-18-1).